A 798-amino-acid polypeptide reads, in one-letter code: Protocadherin beta-13 (798 aa).

A signal peptide spans 1–28 (MEASGKLICRQRQVLFSFLLLGLSLAGA). Topologically, residues 29–690 (AEPRSYSVVE…AQADLLTVYL (662 aa)) are extracellular. Cadherin domains are found at residues 36 to 134 (VVEE…SPVF), 139 to 243 (MLVK…APEF), 248 to 348 (YRVQ…APEV), 353 to 451 (FTSP…APAF), and 456 to 561 (YTLF…SPFV). Residues N418 and N436 are each glycosylated (N-linked (GlcNAc...) asparagine). N567 carries N-linked (GlcNAc...) asparagine glycosylation. The Cadherin 6 domain occupies 568–671 (GSAPCTELVP…LVDGFSQPYL (104 aa)). The chain crosses the membrane as a helical span at residues 691-711 (VVALASVSSLFLFSVLLFVAV). Over 712–798 (RLCRRSRAAS…FPNNFGFNIQ (87 aa)) the chain is Cytoplasmic.

Its subcellular location is the cell membrane. In terms of biological role, potential calcium-dependent cell-adhesion protein. May be involved in the establishment and maintenance of specific neuronal connections in the brain. The protein is Protocadherin beta-13 (PCDHB13) of Homo sapiens (Human).